Here is a 154-residue protein sequence, read N- to C-terminus: Thioredoxin-like protein CXXS2 (154 aa).

Positions 23 to 148 constitute a Thioredoxin domain; the sequence is RRNKTQARSQ…LQKKTAAAAN (126 aa). Position 31 is a phosphoserine (serine 31).

It belongs to the thioredoxin family. As to expression, ubiquitous.

Its subcellular location is the cytoplasm. In terms of biological role, possesses low disulfide reductase activity, but efficient protein disulfide isomerase activity. Does not possess deglutathionylation activity. The polypeptide is Thioredoxin-like protein CXXS2 (CXXS2) (Arabidopsis thaliana (Mouse-ear cress)).